A 422-amino-acid chain; its full sequence is Enolase (422 aa).

Gln162 contacts (2R)-2-phosphoglycerate. Catalysis depends on Glu204, which acts as the Proton donor. Mg(2+)-binding residues include Asp241, Glu285, and Asp312. Residues Lys337, Arg366, Ser367, and Lys388 each coordinate (2R)-2-phosphoglycerate. The Proton acceptor role is filled by Lys337.

It belongs to the enolase family. Requires Mg(2+) as cofactor.

The protein resides in the cytoplasm. It localises to the secreted. Its subcellular location is the cell surface. It catalyses the reaction (2R)-2-phosphoglycerate = phosphoenolpyruvate + H2O. It participates in carbohydrate degradation; glycolysis; pyruvate from D-glyceraldehyde 3-phosphate: step 4/5. Functionally, catalyzes the reversible conversion of 2-phosphoglycerate (2-PG) into phosphoenolpyruvate (PEP). It is essential for the degradation of carbohydrates via glycolysis. This chain is Enolase, found in Wolinella succinogenes (strain ATCC 29543 / DSM 1740 / CCUG 13145 / JCM 31913 / LMG 7466 / NCTC 11488 / FDC 602W) (Vibrio succinogenes).